The sequence spans 374 residues: C-X-C chemokine receptor type 5 (374 aa).

The Extracellular segment spans residues Met1–Pro57. Residue Asn28 is glycosylated (N-linked (GlcNAc...) asparagine). Residues Val58–Leu78 form a helical membrane-spanning segment. Topologically, residues Glu79–Thr90 are cytoplasmic. Residues Phe91 to Ala111 form a helical membrane-spanning segment. Topologically, residues Glu112 to Thr126 are extracellular. Cysteines 124 and 204 form a disulfide. A helical membrane pass occupies residues Val127 to Val147. Topologically, residues Asp148–His169 are cytoplasmic. Residues Ile170 to Ala190 form a helical membrane-spanning segment. Over Lys191–Arg221 the chain is Extracellular. An N-linked (GlcNAc...) asparagine glycan is attached at Asn198. A helical transmembrane segment spans residues Phe222 to Gly242. Over Val243–Arg261 the chain is Cytoplasmic. The chain crosses the membrane as a helical span at residues Val262 to Phe282. The Extracellular portion of the chain corresponds to Leu283–Ile306. Residues Thr307 to Ala327 traverse the membrane as a helical segment. Over Gly328–Phe374 the chain is Cytoplasmic.

The protein belongs to the G-protein coupled receptor 1 family. As to expression, mainly in spleen, in resting B-cells.

The protein localises to the cell membrane. Cytokine receptor that binds to B-lymphocyte chemoattractant (BLC). Involved in B-cell migration into B-cell follicles of spleen and Peyer patches but not into those of mesenteric or peripheral lymph nodes. The sequence is that of C-X-C chemokine receptor type 5 (Cxcr5) from Mus musculus (Mouse).